We begin with the raw amino-acid sequence, 147 residues long: Hemoglobin subunit beta (147 aa).

Residue Val-2 is modified to N-acetylvaline. A Globin domain is found at 3 to 147 (HLTGEEKAAV…VANALAHKYH (145 aa)). Phosphothreonine is present on Thr-13. Ser-45 carries the post-translational modification Phosphoserine. Lys-60 carries the post-translational modification N6-acetyllysine. His-64 lines the heme b pocket. Residue Lys-83 is modified to N6-acetyllysine. Residue His-93 coordinates heme b. Cys-94 bears the S-nitrosocysteine mark. At Lys-145 the chain carries N6-acetyllysine.

It belongs to the globin family. In terms of assembly, heterotetramer of two alpha chains and two beta chains. In terms of tissue distribution, red blood cells.

In terms of biological role, involved in oxygen transport from the lung to the various peripheral tissues. The chain is Hemoglobin subunit beta (HBB) from Cheracebus torquatus (Collared titi monkey).